A 552-amino-acid polypeptide reads, in one-letter code: 2-methyl-1,2-propanediol dehydrogenase (552 aa).

Belongs to the GMC oxidoreductase family. The cofactor is FAD.

The protein localises to the cytoplasm. It catalyses the reaction 2-methylpropane-1,2-diol + NAD(+) = 2-hydroxy-2-methylpropanal + NADH + H(+). Its function is as follows. Involved in the degradation of methyl tert-butyl ether (MTBE). Catalyzes the conversion of 2-methyl 1,2-propanediol (2-M1,2-PD) to hydroxyisobutyraldehyde. This Mycolicibacterium austroafricanum (Mycobacterium austroafricanum) protein is 2-methyl-1,2-propanediol dehydrogenase.